Here is a 449-residue protein sequence, read N- to C-terminus: Phosphoglucosamine mutase (449 aa).

Catalysis depends on Ser-101, which acts as the Phosphoserine intermediate. Mg(2+)-binding residues include Ser-101, Asp-242, Asp-244, and Asp-246. Ser-101 carries the phosphoserine modification.

This sequence belongs to the phosphohexose mutase family. Mg(2+) serves as cofactor. Post-translationally, activated by phosphorylation.

It catalyses the reaction alpha-D-glucosamine 1-phosphate = D-glucosamine 6-phosphate. Functionally, catalyzes the conversion of glucosamine-6-phosphate to glucosamine-1-phosphate. This Bradyrhizobium sp. (strain ORS 278) protein is Phosphoglucosamine mutase.